A 613-amino-acid polypeptide reads, in one-letter code: Serine protease FAM111A (613 aa).

A disordered region spans residues 1-72; sequence MSCKKRKSQI…TRQDQTPPLN (72 aa). A Glycyl lysine isopeptide (Lys-Gly) (interchain with G-Cter in SUMO2) cross-link involves residue Lys19. A Phosphoserine modification is found at Ser25. Lys29 is covalently cross-linked (Glycyl lysine isopeptide (Lys-Gly) (interchain with G-Cter in SUMO2)). Over residues 40-56 the composition is skewed to basic and acidic residues; that stretch reads VDSKKMPRDITNTRDQR. Lys62 is covalently cross-linked (Glycyl lysine isopeptide (Lys-Gly) (interchain with G-Cter in SUMO2)). Catalysis depends on charge relay system residues His383, Asp437, and Ser543.

This sequence belongs to the FAM111 family. Interacts (via PIP-box) with PCNA; this interaction is direct. Autocatalytically cleaved; autocatalytic cleavage takes place in trans.

The protein localises to the nucleus. The protein resides in the chromosome. It localises to the cytoplasm. In terms of biological role, single-stranded DNA-binding serine protease that mediates the proteolytic cleavage of covalent DNA-protein cross-links (DPCs) during DNA synthesis, thereby playing a key role in maintaining genomic integrity. DPCs are highly toxic DNA lesions that interfere with essential chromatin transactions, such as replication and transcription, and which are induced by reactive agents, such as UV light or formaldehyde. Protects replication fork from stalling by removing DPCs, such as covalently trapped topoisomerase 1 (TOP1) adducts on DNA lesion, or poly(ADP-ribose) polymerase 1 (PARP1)-DNA complexes trapped by PARP inhibitors. Required for PCNA loading on replication sites. Promotes S-phase entry and DNA synthesis. This Mus musculus (Mouse) protein is Serine protease FAM111A.